Consider the following 834-residue polypeptide: MSNVPKEKRFIVWLDEVTKDDVVLVGGKNANLGEMIRAGIPVPPGFAVTAYAYKYFIEKTGLKDKIYPLLNSIDVNDKKVLDETTAKIRQWIMDTPMPPEVEEEIRKYYRELAKKIGMEPEKLRVAVRSSATAEDMPEASFAGQQDTYLNVYGEDNVVYYVKRCWASLFTSRAVFYRVAQGIPHEKSLMSVTVQKMVNSRTAGVMFTLHPVTGDEKVVVIEASWGLGESVVGGKVTPDEWVVDKQTLQIVDQKIHHKTLAIVFDPKKGKNVEIRWDENKQAWVSEEGPVDIEMVKHFHPDKPALKEEEVKRLAELALLIEKHYGRHMDIEWAVDYDIPFPDNVFIVQARLETVWSVRKEKEKAEKKAEIKGKNIVKLSEAKVLVRGLPASPGIGAGVAKVIFDPHSKEAQEFKEGEVLVTKMTDPDWVPLMKKAVAIVTDEGGMTSHAAIVSRELGIPAIVGTGNATQVIKSGIEVTVDGSRGVVYEGIVEDLVKPKEEVKAEVAGVGISPEQLLPLYPVTATKIYMNLGEPDAIEKYKDLPFDGIGLMRIEFIITDWVQYHPLYLIEQGKESLFIDKLAEGIAKVAQAIYPRPVVVRFSDFKTNEYRGLKGGEKYEPEERNPMIGWRGVSRYIHPKYEPAFRLEVRAIKKVREEMGLTNVWVMFPFVRTTWELERALKIMEEEGLKRGKDFKVWAMAEVPSIVLLADKFAEYVDGFSIGSNDLTQLILGADRDSNILAEMGYFDERDPAVLAGIKMIIEKAHSKGATVSICGQAPSVYPEIVEFLVEAGIDSISVNPDAVIATRRLVASIERKIMLKRLNKIMDKLNKLELGF.

H447 acts as the Tele-phosphohistidine intermediate in catalysis. The substrate site is built by R550, R598, E699, G720, S721, N722, and D723. Mg(2+) is bound at residue E699. D723 provides a ligand contact to Mg(2+). C772 functions as the Proton donor in the catalytic mechanism.

The protein belongs to the PEP-utilizing enzyme family. In terms of assembly, homooligomer. Forms a large complex of about 2000 kDa. Mg(2+) serves as cofactor. In terms of processing, the N-terminus is blocked.

It catalyses the reaction pyruvate + ATP + H2O = phosphoenolpyruvate + AMP + phosphate + 2 H(+). It functions in the pathway carbohydrate biosynthesis; gluconeogenesis. In terms of biological role, catalyzes the phosphorylation of pyruvate to phosphoenolpyruvate. This chain is Probable phosphoenolpyruvate synthase (ppsA), found in Staphylothermus marinus (strain ATCC 43588 / DSM 3639 / JCM 9404 / F1).